We begin with the raw amino-acid sequence, 446 residues long: Putrescine N-hydroxylase (446 aa).

FAD contacts are provided by Phe-17, Asp-37, Ser-38, Lys-39, Trp-44, and His-45. NADP(+) is bound by residues Thr-54, Gln-56, and Arg-98. Gln-56 serves as a coordination point for FAD. Val-121 is an FAD binding site. NADP(+)-binding residues include Ser-199, Lys-223, Tyr-267, and Leu-301. 3 residues coordinate FAD: Asn-378, Pro-389, and Leu-391.

This sequence belongs to the lysine N(6)-hydroxylase/L-ornithine N(5)-oxygenase family. In terms of assembly, homotetramer. FAD is required as a cofactor.

It carries out the reaction putrescine + NADPH + O2 = N-hydroxyputrescine + NADP(+) + H2O. It participates in siderophore biosynthesis. In terms of biological role, N-hydroxylating monooxygenase involved in the biosynthesis of fimsbactin A, the major siderophore produced by A.baumannii. Catalyzes the N-hydroxylation of the aliphatic diamine putrescine into N-hydroxyputrescine (NHP). Putrescine is the preferred substrate, but the enzyme can also catalyze the N-hydroxylation of cadaverine, with 4-fold lower catalytic efficiency. Cannot use lysine or ornithine as substrates. Uses both NADPH and NADH as the reducing cofactor with a preference for NADPH. This Acinetobacter baumannii (strain ATCC 17978 / DSM 105126 / CIP 53.77 / LMG 1025 / NCDC KC755 / 5377) protein is Putrescine N-hydroxylase.